The chain runs to 147 residues: Nucleoside diphosphate kinase (147 aa).

ATP is bound by residues K9, F57, R85, T91, R102, and N112. H115 acts as the Pros-phosphohistidine intermediate in catalysis.

It belongs to the NDK family. As to quaternary structure, homotetramer. Mg(2+) serves as cofactor.

It localises to the cytoplasm. It carries out the reaction a 2'-deoxyribonucleoside 5'-diphosphate + ATP = a 2'-deoxyribonucleoside 5'-triphosphate + ADP. The catalysed reaction is a ribonucleoside 5'-diphosphate + ATP = a ribonucleoside 5'-triphosphate + ADP. In terms of biological role, major role in the synthesis of nucleoside triphosphates other than ATP. The ATP gamma phosphate is transferred to the NDP beta phosphate via a ping-pong mechanism, using a phosphorylated active-site intermediate. This chain is Nucleoside diphosphate kinase, found in Brevibacillus brevis (strain 47 / JCM 6285 / NBRC 100599).